The sequence spans 184 residues: Putative rRNA methyltransferase YlbH (184 aa).

A disordered region spans residues 1 to 22; the sequence is MRVISGSKKGRSLKAVAGTSTR.

This sequence belongs to the methyltransferase superfamily. RsmD family.

May catalyze the S-adenosyl-L-methionine-dependent methylation of a specific base in rRNA. This is Putative rRNA methyltransferase YlbH (ylbH) from Bacillus subtilis (strain 168).